The chain runs to 389 residues: Chitinase-3-like protein 1 (389 aa).

An N-terminal signal peptide occupies residues 1–29 (MHTSTEARMGMRAALTGFAVLMLLQSCSA). The region spanning 30 to 389 (YKLVCYFTSW…LTNAIKDALA (360 aa)) is the GH18 domain. Cys-34 and Cys-59 are disulfide-bonded. Asn-68 is a glycosylation site (N-linked (GlcNAc...) asparagine). Chitin contacts are provided by residues 79-80 (EW), 106-109 (GGWK), Tyr-150, and 213-216 (MTYD). Residues Cys-309 and Cys-372 are joined by a disulfide bond. Positions 333 to 347 (QWVGYEDKESVKNKV) are important for AKT1 activation and IL8 production. Position 361 (Trp-361) interacts with chitin.

It belongs to the glycosyl hydrolase 18 family. In terms of assembly, monomer. As to expression, detected in lung in pulmonary macrophages and alveolar type 2 cells and in bronchoalveolar lavage (BAL) fluids. Expressed in mammary tumor cells (at protein level). Expressed in lung. Not detected in non-inflammatory colon.

It localises to the secreted. The protein resides in the extracellular space. It is found in the cytoplasm. Its subcellular location is the endoplasmic reticulum. Its function is as follows. Carbohydrate-binding lectin with a preference for chitin. Has no chitinase activity. May play a role in tissue remodeling and in the capacity of cells to respond to and cope with changes in their environment. Plays a role in T-helper cell type 2 (Th2) inflammatory response and IL-13-induced inflammation, regulating allergen sensitization, inflammatory cell apoptosis, dendritic cell accumulation and M2 macrophage differentiation. Facilitates invasion of pathogenic enteric bacteria into colonic mucosa and lymphoid organs. Mediates activation of AKT1 signaling pathway and subsequent IL8 production in colonic epithelial cells. Regulates antibacterial responses in lung by contributing to macrophage bacterial killing, controlling bacterial dissemination and augmenting host tolerance. Also regulates hyperoxia-induced injury, inflammation and epithelial apoptosis in lung. This chain is Chitinase-3-like protein 1 (Chi3l1), found in Mus musculus (Mouse).